Reading from the N-terminus, the 95-residue chain is Class I hydrophobin 13 (95 aa).

4 disulfides stabilise this stretch: C14–C74, C21–C68, C22–C55, and C75–C88. N-linked (GlcNAc...) asparagine glycosylation is found at N23 and N77.

The protein belongs to the fungal hydrophobin family. In terms of assembly, self-assembles to form functional amyloid fibrils called rodlets. Self-assembly into fibrillar rodlets occurs spontaneously at hydrophobic:hydrophilic interfaces and the rodlets further associate laterally to form amphipathic monolayers.

The protein resides in the secreted. Its subcellular location is the cell wall. Functionally, aerial growth, conidiation, and dispersal of filamentous fungi in the environment rely upon a capability of their secreting small amphipathic proteins called hydrophobins (HPBs) with low sequence identity. Class I can self-assemble into an outermost layer of rodlet bundles on aerial cell surfaces, conferring cellular hydrophobicity that supports fungal growth, development and dispersal; whereas Class II form highly ordered films at water-air interfaces through intermolecular interactions but contribute nothing to the rodlet structure. This Pleurotus ostreatus (strain PC15) (Oyster mushroom) protein is Class I hydrophobin 13.